The following is a 770-amino-acid chain: Glutamate carboxypeptidase 2 homolog (770 aa).

The Cytoplasmic portion of the chain corresponds to 1 to 19; that stretch reads MPYVGVGAQKASTNLTGGP. The helical; Signal-anchor for type II membrane protein transmembrane segment at 20-40 threads the bilayer; the sequence is MMKAYAFVLAFFLLGLGVLAL. The Extracellular segment spans residues 41 to 770; sequence GKHHSGRRFN…CVVNTLRDVI (730 aa). N-linked (GlcNAc...) asparagine glycans are attached at residues Asn-175 and Asn-337. The interval 282–597 is catalytic; the sequence is SKKELFKGRT…QYWAELAKTF (316 aa). 2 residues coordinate Zn(2+): His-387 and Asp-397. N-linked (GlcNAc...) asparagine glycosylation is present at Asn-417. Glu-435 acts as the Nucleophile in catalysis. Residues Glu-436 and Asp-464 each contribute to the Zn(2+) site. N-linked (GlcNAc...) asparagine glycosylation is found at Asn-469 and Asn-551. His-562 lines the Zn(2+) pocket. Residues Asn-606 and Asn-630 are each glycosylated (N-linked (GlcNAc...) asparagine).

It belongs to the peptidase M28 family. M28B subfamily. It depends on Zn(2+) as a cofactor.

The protein resides in the membrane. The catalysed reaction is Release of an unsubstituted, C-terminal glutamyl residue, typically from Ac-Asp-Glu or folylpoly-gamma-glutamates.. The polypeptide is Glutamate carboxypeptidase 2 homolog (Caenorhabditis briggsae).